Here is a 1011-residue protein sequence, read N- to C-terminus: Probable calcium-transporting ATPase (1011 aa).

Over 1–65 (MLPENLPTDP…WKLVLAQFED (65 aa)) the chain is Cytoplasmic. Residues 66-84 (TLVRILLLAATVSFAMAVV) traverse the membrane as a helical segment. Residues 85 to 90 (ENNAAD) lie on the Extracellular side of the membrane. Residues 91-110 (FVEPFIILLILILNATVGVW) form a helical membrane-spanning segment. Over 111–258 (QENRAEGAIE…QVKLDEFGVL (148 aa)) the chain is Cytoplasmic. The helical transmembrane segment at 259–278 (LSKVIGYICLVVFAVNLVRW) threads the bilayer. Residues 279 to 303 (YATHKPTKNETFFTRYIQPSVHCLK) are Extracellular-facing. The helical transmembrane segment at 304–321 (VAVALAVAAIPEGLPAVV) threads the bilayer. Topologically, residues 322 to 770 (TTCLALGTRR…RYLISSNIGE (449 aa)) are cytoplasmic. D357 functions as the 4-aspartylphosphate intermediate in the catalytic mechanism. K514 is a binding site for ATP. The chain crosses the membrane as a helical span at residues 771–794 (VVCILVTGLFGLPEALSPVQLLWV). At 795–835 (NLVTDGLPATALGFNAPDRDIMEQRPRRMEEPIVNGWLFMR) the chain is on the extracellular side. Residues 836 to 856 (YMVIGVYVGLATVGGFLWWFL) traverse the membrane as a helical segment. Topologically, residues 857-885 (RHGFSWHDLTTYTACSDMTNGTCLLLANP) are cytoplasmic. Residues 886–905 (QTARAIALSILVVVEMLNAL) form a helical membrane-spanning segment. The Extracellular portion of the chain corresponds to 906–922 (NALSENASLIVSRPSSN). A helical membrane pass occupies residues 923 to 942 (VWLLFAIFSSLSLHLIIMYV). Residues 943 to 1011 (PFFAKLFNIV…MEKAQEKKKD (69 aa)) lie on the Cytoplasmic side of the membrane.

Belongs to the cation transport ATPase (P-type) (TC 3.A.3) family.

The protein resides in the flagellar pocket. It is found in the cell membrane. The catalysed reaction is Ca(2+)(in) + ATP + H2O = Ca(2+)(out) + ADP + phosphate + H(+). Functionally, this magnesium-dependent enzyme catalyzes the hydrolysis of ATP coupled with the transport of the calcium. The chain is Probable calcium-transporting ATPase (TBA1) from Trypanosoma brucei brucei.